The sequence spans 43 residues: Seed non-specific lipid transfer protein-like (43 aa).

It belongs to the plant LTP family. Homodimer.

Its function is as follows. Plant non-specific lipid-transfer proteins transfer phospholipids as well as galactolipids across membranes. May play a role in wax or cutin deposition in the cell walls of expanding epidermal cells and certain secretory tissues. This isoform inhibits the hyphal growth of several fungi in vitro. The protein is Seed non-specific lipid transfer protein-like of Raphanus sativus (Radish).